The chain runs to 162 residues: Sec-independent protein translocase protein TatB (162 aa).

A helical membrane pass occupies residues 1–21 (MFDIGFSELILIFVVGLVVLG). Positions 136-162 (LTAYYPPDDDLVSPSTTKLEQDKQNVN) are disordered.

It belongs to the TatB family. In terms of assembly, the Tat system comprises two distinct complexes: a TatABC complex, containing multiple copies of TatA, TatB and TatC subunits, and a separate TatA complex, containing only TatA subunits. Substrates initially bind to the TatABC complex, which probably triggers association of the separate TatA complex to form the active translocon.

The protein resides in the cell inner membrane. Functionally, part of the twin-arginine translocation (Tat) system that transports large folded proteins containing a characteristic twin-arginine motif in their signal peptide across membranes. Together with TatC, TatB is part of a receptor directly interacting with Tat signal peptides. TatB may form an oligomeric binding site that transiently accommodates folded Tat precursor proteins before their translocation. The polypeptide is Sec-independent protein translocase protein TatB (Haemophilus ducreyi (strain 35000HP / ATCC 700724)).